The chain runs to 330 residues: Phosphate acyltransferase (330 aa).

Belongs to the PlsX family. Homodimer. Probably interacts with PlsY.

It is found in the cytoplasm. The catalysed reaction is a fatty acyl-[ACP] + phosphate = an acyl phosphate + holo-[ACP]. It functions in the pathway lipid metabolism; phospholipid metabolism. Functionally, catalyzes the reversible formation of acyl-phosphate (acyl-PO(4)) from acyl-[acyl-carrier-protein] (acyl-ACP). This enzyme utilizes acyl-ACP as fatty acyl donor, but not acyl-CoA. The protein is Phosphate acyltransferase of Bacillus anthracis (strain A0248).